The following is a 408-amino-acid chain: NADH-quinone oxidoreductase subunit D (408 aa).

This sequence belongs to the complex I 49 kDa subunit family. As to quaternary structure, NDH-1 is composed of 14 different subunits. Subunits NuoB, C, D, E, F, and G constitute the peripheral sector of the complex.

It is found in the cell inner membrane. It carries out the reaction a quinone + NADH + 5 H(+)(in) = a quinol + NAD(+) + 4 H(+)(out). Its function is as follows. NDH-1 shuttles electrons from NADH, via FMN and iron-sulfur (Fe-S) centers, to quinones in the respiratory chain. The immediate electron acceptor for the enzyme in this species is believed to be ubiquinone. Couples the redox reaction to proton translocation (for every two electrons transferred, four hydrogen ions are translocated across the cytoplasmic membrane), and thus conserves the redox energy in a proton gradient. The chain is NADH-quinone oxidoreductase subunit D from Campylobacter jejuni subsp. doylei (strain ATCC BAA-1458 / RM4099 / 269.97).